A 145-amino-acid chain; its full sequence is Small ribosomal subunit protein uS19 (145 aa).

N-acetylalanine is present on Ala2. Lys108 participates in a covalent cross-link: Glycyl lysine isopeptide (Lys-Gly) (interchain with G-Cter in SUMO2).

It belongs to the universal ribosomal protein uS19 family. As to quaternary structure, component of the small ribosomal subunit.

It is found in the cytoplasm. Functionally, component of the small ribosomal subunit. The ribosome is a large ribonucleoprotein complex responsible for the synthesis of proteins in the cell. This is Small ribosomal subunit protein uS19 (RPS15) from Oryctolagus cuniculus (Rabbit).